Here is a 119-residue protein sequence, read N- to C-terminus: Toxin ICK-9 (119 aa).

A signal peptide spans Met-1–Ala-19. 4 disulfide bridges follow: Cys-59–Cys-74, Cys-67–Cys-80, Cys-71–Cys-116, and Cys-73–Cys-87.

This sequence belongs to the neurotoxin 25 family. ICK-8 subfamily. Expressed by the venom gland.

It is found in the secreted. In terms of biological role, ion channel inhibitor. This chain is Toxin ICK-9, found in Trittame loki (Brush-footed trapdoor spider).